The sequence spans 243 residues: MKRIIEICANSAQSCVEAEAGGATRVELCAGIPEGGTTPSYGEIKTAKALTSKIDINVIIRPRGGDFLYTEAEVQSMLLDIELCKELKVHGVVFGCLTKDGDIDVPLMRRLIEAAKPLSVTCHRAFDVCRDPFTALEQLIELGCDRILTSGQQSDAVKGIPLIAELVKRADGRIIIMPGCGVRENNIGKIEAETGAKEFHTSARSIVYSKMEYRNENVPMGSSIVSSEFETVQTDREKVKAYI.

The protein belongs to the CutC family.

It localises to the cytoplasm. The protein is PF03932 family protein CutC of Parabacteroides distasonis (strain ATCC 8503 / DSM 20701 / CIP 104284 / JCM 5825 / NCTC 11152).